A 136-amino-acid polypeptide reads, in one-letter code: Protein NrdI (136 aa).

Belongs to the NrdI family.

Functionally, probably involved in ribonucleotide reductase function. The polypeptide is Protein NrdI (Escherichia coli O7:K1 (strain IAI39 / ExPEC)).